The following is a 118-amino-acid chain: Small ribosomal subunit protein uS13 (118 aa).

Residues 94 to 118 form a disordered region; that stretch reads SLPLRGQRTKTNARTRKGPRKPIKK.

It belongs to the universal ribosomal protein uS13 family. In terms of assembly, part of the 30S ribosomal subunit. Forms a loose heterodimer with protein S19. Forms two bridges to the 50S subunit in the 70S ribosome.

Located at the top of the head of the 30S subunit, it contacts several helices of the 16S rRNA. In the 70S ribosome it contacts the 23S rRNA (bridge B1a) and protein L5 of the 50S subunit (bridge B1b), connecting the 2 subunits; these bridges are implicated in subunit movement. Contacts the tRNAs in the A and P-sites. This is Small ribosomal subunit protein uS13 from Vibrio vulnificus (strain CMCP6).